The primary structure comprises 252 residues: Imidazole glycerol phosphate synthase subunit HisF (252 aa).

Active-site residues include Asp11 and Asp130.

Belongs to the HisA/HisF family. Heterodimer of HisH and HisF.

It is found in the cytoplasm. The enzyme catalyses 5-[(5-phospho-1-deoxy-D-ribulos-1-ylimino)methylamino]-1-(5-phospho-beta-D-ribosyl)imidazole-4-carboxamide + L-glutamine = D-erythro-1-(imidazol-4-yl)glycerol 3-phosphate + 5-amino-1-(5-phospho-beta-D-ribosyl)imidazole-4-carboxamide + L-glutamate + H(+). Its pathway is amino-acid biosynthesis; L-histidine biosynthesis; L-histidine from 5-phospho-alpha-D-ribose 1-diphosphate: step 5/9. IGPS catalyzes the conversion of PRFAR and glutamine to IGP, AICAR and glutamate. The HisF subunit catalyzes the cyclization activity that produces IGP and AICAR from PRFAR using the ammonia provided by the HisH subunit. In Dictyoglomus turgidum (strain DSM 6724 / Z-1310), this protein is Imidazole glycerol phosphate synthase subunit HisF.